A 934-amino-acid chain; its full sequence is MAAAAEPGARTWPGSGSPRLGSPAGSPVLGISGRTRPGSGPERTSRAIGSAAPGHSFRKVTLTKPTFCHLCSDFIWGLAGFLCDVCNFMSHEKCLKQVKTPCTSIAPSLVRVPVAHCFGSLGLYKRKFCVVCRKSLEVPAFRCEVCELHVHPDCVPFACSDCRQCHQDGQQDYDTYHHHWREGNLPSGARCEVCRKTCGSSDVLAGVRCEWCGVQAHSVCSTALAPECTFGRLRSMVLPPSCVRLLSRNFSKMHCFRIPETMVLELGDGDDGVDGSAAIGTGREVLTATESTKQTLKIFDGNDSMRKNQFRLVTVSRLARNEEVMEAALRAYYISEDPKDFQLQALPLSGNAQALGKAGTTEEEASKGSCPRDSVPEAWVIRSLPRTQEILKIYPGWLKVGVAYVSIRVNSQSTARSVVQEVLPLFGQQVEDKERFQLIEVLMSSRQVQRTVLADEEPLLDRLWDIRQTSVRQVSQTRFYVAETRATAPRVSLFVGGLPPGLSPQDYSNLLHEAMATKAAVVSVSHVYSLQGAVILDVTCFAEAERLYMLARDTAVHGRPLTALVLPDVLHTKLPPDCCPLLVFVNPKSGGLKGRELLCSFRKLLNPHQVFELTNGGPLPGFHLFSQVPSFRVLVCGGDGTVGWVLAALEETRRHLACPEPSVAILPLGTGNDLGRVLRWGAGYSGEDPFSVLVSVDEADAVLMDRWTILLDAHEIDSTENNVVETEPPKIVQMNNYCGIGIDAELSLDFHQAREEEPGKFTSRFHNKGVYVRVGLQKISHSRSLHKEIRLQVEQQEVELPSIEGLIFINIPSWGSGADLWGSDNDSRFEKPRIDDGLLEVVGVTGVVHMGQVQGGLRSGIRIAQGSYFRVTLLKATPVQVDGEPWVQAPGHMIISATAPKVHMLRKAKQKPRKAGANRDTRVDTLPAPEGNPL.

The segment at 1-50 is disordered; it reads MAAAAEPGARTWPGSGSPRLGSPAGSPVLGISGRTRPGSGPERTSRAIGS. Ser-22 and Ser-26 each carry phosphoserine. Phorbol-ester/DAG-type zinc fingers lie at residues 54 to 102, 115 to 162, and 177 to 228; these read GHSF…KTPC, AHCF…CSDC, and HHHW…APEC. The Ras-associating domain maps to 387-486; it reads TQEILKIYPG…TRFYVAETRA (100 aa). 2 consecutive short sequence motifs (LXXLL motif) follow at residues 547-551 and 566-570; these read LYMLA and LPDVL. In terms of domain architecture, DAGKc spans 576–713; the sequence is PDCCPLLVFV…MDRWTILLDA (138 aa). The span at 905–916 shows a compositional bias: basic residues; it reads LRKAKQKPRKAG. Residues 905 to 934 are disordered; that stretch reads LRKAKQKPRKAGANRDTRVDTLPAPEGNPL.

This sequence belongs to the eukaryotic diacylglycerol kinase family. As to quaternary structure, interacts with RHOA (constitutively activated, GTP-bound); the interaction inhibits DGKQ. Interacts with PRKCE. Interacts with PRKCH. Interacts with PLCB1. Interacts with NR5A1; the interaction requires both LXXLL motifs in DGKQ and is required for full phosphatidic acid-mediated activation of NR5A1. Post-translationally, phosphorylated by PRKCE and PRKCH in vitro. Widely expressed in all brain regions, including the cortex and hippocampus with a specific expression in neuronal cells (at protein level).

Its subcellular location is the cytoplasm. It localises to the cytosol. The protein resides in the cell membrane. It is found in the synapse. The protein localises to the cytoskeleton. Its subcellular location is the nucleus. It localises to the nucleus speckle. The protein resides in the nucleus matrix. The catalysed reaction is a 1,2-diacyl-sn-glycerol + ATP = a 1,2-diacyl-sn-glycero-3-phosphate + ADP + H(+). It catalyses the reaction a 1-O-alkyl-sn-glycerol + ATP = a 1-O-alkyl-sn-glycero-3-phosphate + ADP + H(+). The enzyme catalyses 1-O-alkyl-2-acyl-sn-glycerol + ATP = 1-O-alkyl-2-acyl-sn-glycero-3-phosphate + ADP + H(+). It carries out the reaction 1,2-di-(9Z-octadecenoyl)-sn-glycerol + ATP = 1,2-di-(9Z-octadecenoyl)-sn-glycero-3-phosphate + ADP + H(+). The catalysed reaction is 1-O-hexadecyl-sn-glycerol + ATP = 1-O-hexadecyl-sn-glycero-3-phosphate + ADP + H(+). It catalyses the reaction 1-O-hexadecyl-2-acetyl-sn-glycerol + ATP = 1-O-hexadecyl-2-acetyl-sn-glycero-3-phosphate + ADP + H(+). The enzyme catalyses 1-octadecanoyl-2-(5Z,8Z,11Z,14Z-eicosatetraenoyl)-sn-glycerol + ATP = 1-octadecanoyl-2-(5Z,8Z,11Z,14Z-eicosatetraenoyl)-sn-glycero-3-phosphate + ADP + H(+). It participates in lipid metabolism; glycerolipid metabolism. With respect to regulation, activated by phosphatidylserine. In terms of biological role, diacylglycerol kinase that converts diacylglycerol/DAG into phosphatidic acid/phosphatidate/PA and regulates the respective levels of these two bioactive lipids. Thereby, acts as a central switch between the signaling pathways activated by these second messengers with different cellular targets and opposite effects in numerous biological processes. Within the adrenocorticotropic hormone signaling pathway, produces phosphatidic acid which in turn activates NR5A1 and subsequent steroidogenic gene transcription. Also functions downstream of the nerve growth factor signaling pathway being specifically activated in the nucleus by the growth factor. Through its diacylglycerol activity also regulates synaptic vesicle endocytosis. This chain is Diacylglycerol kinase theta (Dgkq), found in Mus musculus (Mouse).